The sequence spans 286 residues: Eukaryotic translation initiation factor 3 subunit F-2 (286 aa).

In terms of domain architecture, MPN spans 11-147; the sequence is ILLQPLVLLH…MRLYTAVVMG (137 aa).

It belongs to the eIF-3 subunit F family. Component of the eukaryotic translation initiation factor 3 (eIF-3) complex. The eIF-3 complex interacts with pix.

It localises to the cytoplasm. Functionally, component of the eukaryotic translation initiation factor 3 (eIF-3) complex, which is involved in protein synthesis of a specialized repertoire of mRNAs and, together with other initiation factors, stimulates binding of mRNA and methionyl-tRNAi to the 40S ribosome. The eIF-3 complex specifically targets and initiates translation of a subset of mRNAs involved in cell proliferation. This Drosophila willistoni (Fruit fly) protein is Eukaryotic translation initiation factor 3 subunit F-2.